The primary structure comprises 92 residues: uncharacterized protein (92 aa).

This is an uncharacterized protein from Escherichia coli (strain K12).